Reading from the N-terminus, the 303-residue chain is Recombination-associated protein RdgC (303 aa).

It belongs to the RdgC family.

The protein localises to the cytoplasm. The protein resides in the nucleoid. May be involved in recombination. This is Recombination-associated protein RdgC from Shewanella halifaxensis (strain HAW-EB4).